A 215-amino-acid polypeptide reads, in one-letter code: Adenylate kinase (215 aa).

ATP is bound at residue 10 to 15; sequence GAGKGT. The NMP stretch occupies residues 30–59; that stretch reads STGDIFRDAVNQGSELGQEAQKYMSSGQLV. AMP is bound by residues T31, R36, 57–59, 85–88, and Q92; these read QLV and GFPR. Residues 126 to 163 form an LID region; that stretch reads GRISCRECKRVYNLNFNPPREQGKCDSCGGELVQRNDD. R127 contacts ATP. C130 and C133 together coordinate Zn(2+). ATP is bound at residue 136 to 137; the sequence is VY. Residues C150 and C153 each coordinate Zn(2+). AMP contacts are provided by R160 and R171. Position 199 (R199) interacts with ATP.

It belongs to the adenylate kinase family. As to quaternary structure, monomer.

It is found in the cytoplasm. It catalyses the reaction AMP + ATP = 2 ADP. The protein operates within purine metabolism; AMP biosynthesis via salvage pathway; AMP from ADP: step 1/1. Its function is as follows. Catalyzes the reversible transfer of the terminal phosphate group between ATP and AMP. Plays an important role in cellular energy homeostasis and in adenine nucleotide metabolism. The chain is Adenylate kinase from Syntrophomonas wolfei subsp. wolfei (strain DSM 2245B / Goettingen).